A 388-amino-acid polypeptide reads, in one-letter code: Leucine aminopeptidase 1 (388 aa).

An N-terminal signal peptide occupies residues 1-19; the sequence is MKVLTAIALSAIAFTGAVA. A propeptide spanning residues 20–88 is cleaved from the precursor; sequence AVITQEAFLN…YPTLHSASYV (69 aa). N-linked (GlcNAc...) asparagine glycans are attached at residues Asn-106 and Asn-180. Zn(2+) contacts are provided by His-188 and Asp-207. A glycan (N-linked (GlcNAc...) asparagine) is linked at Asn-232. Residues Glu-246 and Asp-273 each contribute to the Zn(2+) site. The cysteines at positions 322 and 326 are disulfide-linked. His-355 is a binding site for Zn(2+).

It belongs to the peptidase M28 family. M28E subfamily. In terms of assembly, monomer. It depends on Zn(2+) as a cofactor.

The protein resides in the secreted. In terms of biological role, extracellular aminopeptidase that allows assimilation of proteinaceous substrates and which contributes to pathogenicity. This Aspergillus fumigatus (strain CBS 144.89 / FGSC A1163 / CEA10) (Neosartorya fumigata) protein is Leucine aminopeptidase 1 (lap1).